Reading from the N-terminus, the 204-residue chain is Guanylate kinase (204 aa).

The Guanylate kinase-like domain maps to 18-196 (PKLFTISAPA…SYEILKSIFI (179 aa)). Position 25–32 (25–32 (APAGAGKT)) interacts with ATP.

The protein belongs to the guanylate kinase family.

The protein localises to the cytoplasm. It carries out the reaction GMP + ATP = GDP + ADP. Its function is as follows. Essential for recycling GMP and indirectly, cGMP. This is Guanylate kinase from Chlamydia felis (strain Fe/C-56) (Chlamydophila felis).